A 163-amino-acid chain; its full sequence is Lysosomal enzyme trafficking factor (163 aa).

2 consecutive transmembrane segments (helical) span residues M40 to F60 and L98 to L118.

The protein belongs to the LYSET family. In terms of assembly, interacts with GNPTAB; this interaction is important for proper localization of GNPTAB in Golgi stacks. Interacts with MBTPS1.

Its subcellular location is the golgi apparatus membrane. Required for mannose-6-phosphate-dependent trafficking of lysosomal enzymes. LYSET bridges GlcNAc-1-phosphate transferase (GNPTAB), to the membrane-bound transcription factor site-1 protease (MBTPS1), thus allowing proteolytic activation of the GNPTAB. GNPTAB is involved in the regulation of M6P-dependent Golgi-to-lysosome trafficking of lysosomal enzymes. LYSET is thus an essential factor for maturation and delivery of lysosomal hydrolases. Plays an essential function for cells that depend on lysosomal catabolism to generate nutrients. The sequence is that of Lysosomal enzyme trafficking factor (Lyset) from Mus musculus (Mouse).